A 183-amino-acid polypeptide reads, in one-letter code: Cell division protein ZapC (183 aa).

It belongs to the ZapC family. In terms of assembly, interacts directly with FtsZ.

Its subcellular location is the cytoplasm. In terms of biological role, contributes to the efficiency of the cell division process by stabilizing the polymeric form of the cell division protein FtsZ. Acts by promoting interactions between FtsZ protofilaments and suppressing the GTPase activity of FtsZ. The sequence is that of Cell division protein ZapC from Proteus mirabilis (strain HI4320).